Consider the following 432-residue polypeptide: Adenylosuccinate synthetase (432 aa).

GTP contacts are provided by residues 13–19 and 41–43; these read GDEGKGK and GHT. Aspartate 14 functions as the Proton acceptor in the catalytic mechanism. The Mg(2+) site is built by aspartate 14 and glycine 41. IMP is bound by residues 14–17, 39–42, threonine 130, arginine 144, glutamine 225, threonine 240, and arginine 304; these read DEGK and NAGH. Catalysis depends on histidine 42, which acts as the Proton donor. 300 to 306 lines the substrate pocket; that stretch reads ATTGRRR. GTP is bound by residues arginine 306, 332 to 334, and 415 to 417; these read KLD and STG.

The protein belongs to the adenylosuccinate synthetase family. As to quaternary structure, homodimer. The cofactor is Mg(2+).

It localises to the cytoplasm. The catalysed reaction is IMP + L-aspartate + GTP = N(6)-(1,2-dicarboxyethyl)-AMP + GDP + phosphate + 2 H(+). Its pathway is purine metabolism; AMP biosynthesis via de novo pathway; AMP from IMP: step 1/2. Functionally, plays an important role in the de novo pathway of purine nucleotide biosynthesis. Catalyzes the first committed step in the biosynthesis of AMP from IMP. The sequence is that of Adenylosuccinate synthetase from Baumannia cicadellinicola subsp. Homalodisca coagulata.